The following is a 324-amino-acid chain: Biotin synthase (324 aa).

Positions 43 to 273 (FCGNYFNFCS…HVFLRLAGGR (231 aa)) constitute a Radical SAM core domain. 3 residues coordinate [4Fe-4S] cluster: cysteine 61, cysteine 65, and cysteine 68. Serine 105, cysteine 138, cysteine 198, and arginine 268 together coordinate [2Fe-2S] cluster.

This sequence belongs to the radical SAM superfamily. Biotin synthase family. Homodimer. The cofactor is [4Fe-4S] cluster. Requires [2Fe-2S] cluster as cofactor.

It catalyses the reaction (4R,5S)-dethiobiotin + (sulfur carrier)-SH + 2 reduced [2Fe-2S]-[ferredoxin] + 2 S-adenosyl-L-methionine = (sulfur carrier)-H + biotin + 2 5'-deoxyadenosine + 2 L-methionine + 2 oxidized [2Fe-2S]-[ferredoxin]. It participates in cofactor biosynthesis; biotin biosynthesis; biotin from 7,8-diaminononanoate: step 2/2. Catalyzes the conversion of dethiobiotin (DTB) to biotin by the insertion of a sulfur atom into dethiobiotin via a radical-based mechanism. This is Biotin synthase from Campylobacter hominis (strain ATCC BAA-381 / DSM 21671 / CCUG 45161 / LMG 19568 / NCTC 13146 / CH001A).